The chain runs to 556 residues: 2-succinyl-5-enolpyruvyl-6-hydroxy-3-cyclohexene-1-carboxylate synthase (556 aa).

Belongs to the TPP enzyme family. MenD subfamily. As to quaternary structure, homodimer. Mg(2+) is required as a cofactor. Requires Mn(2+) as cofactor. The cofactor is thiamine diphosphate.

The enzyme catalyses isochorismate + 2-oxoglutarate + H(+) = 5-enolpyruvoyl-6-hydroxy-2-succinyl-cyclohex-3-ene-1-carboxylate + CO2. It functions in the pathway quinol/quinone metabolism; 1,4-dihydroxy-2-naphthoate biosynthesis; 1,4-dihydroxy-2-naphthoate from chorismate: step 2/7. The protein operates within quinol/quinone metabolism; menaquinone biosynthesis. Functionally, catalyzes the thiamine diphosphate-dependent decarboxylation of 2-oxoglutarate and the subsequent addition of the resulting succinic semialdehyde-thiamine pyrophosphate anion to isochorismate to yield 2-succinyl-5-enolpyruvyl-6-hydroxy-3-cyclohexene-1-carboxylate (SEPHCHC). The chain is 2-succinyl-5-enolpyruvyl-6-hydroxy-3-cyclohexene-1-carboxylate synthase from Salmonella paratyphi C (strain RKS4594).